The sequence spans 61 residues: Large ribosomal subunit protein bL32 (61 aa).

Belongs to the bacterial ribosomal protein bL32 family.

This Ehrlichia chaffeensis (strain ATCC CRL-10679 / Arkansas) protein is Large ribosomal subunit protein bL32.